The chain runs to 200 residues: ATP-dependent Clp protease proteolytic subunit (200 aa).

Serine 96 serves as the catalytic Nucleophile. Residue histidine 121 is part of the active site.

The protein belongs to the peptidase S14 family. As to quaternary structure, fourteen ClpP subunits assemble into 2 heptameric rings which stack back to back to give a disk-like structure with a central cavity, resembling the structure of eukaryotic proteasomes.

It localises to the cytoplasm. It carries out the reaction Hydrolysis of proteins to small peptides in the presence of ATP and magnesium. alpha-casein is the usual test substrate. In the absence of ATP, only oligopeptides shorter than five residues are hydrolyzed (such as succinyl-Leu-Tyr-|-NHMec, and Leu-Tyr-Leu-|-Tyr-Trp, in which cleavage of the -Tyr-|-Leu- and -Tyr-|-Trp bonds also occurs).. Its function is as follows. Cleaves peptides in various proteins in a process that requires ATP hydrolysis. Has a chymotrypsin-like activity. Plays a major role in the degradation of misfolded proteins. The sequence is that of ATP-dependent Clp protease proteolytic subunit from Leuconostoc citreum (strain KM20).